A 264-amino-acid chain; its full sequence is Undecaprenyl-diphosphatase (264 aa).

A run of 7 helical transmembrane segments spans residues 38–58 (RSDF…VLVF), 75–95 (REYV…GLVV), 106–126 (VSPV…VEAY), 136–156 (VTWT…VFPG), 181–201 (FVFL…FLEM), 217–237 (VAFL…MGYI), and 242–262 (FTAF…WLPS).

The protein belongs to the UppP family.

The protein resides in the cell inner membrane. The enzyme catalyses di-trans,octa-cis-undecaprenyl diphosphate + H2O = di-trans,octa-cis-undecaprenyl phosphate + phosphate + H(+). In terms of biological role, catalyzes the dephosphorylation of undecaprenyl diphosphate (UPP). Confers resistance to bacitracin. This is Undecaprenyl-diphosphatase from Stenotrophomonas maltophilia (strain R551-3).